The chain runs to 64 residues: Large ribosomal subunit protein bL28 (64 aa).

The interval 1–21 is disordered; sequence MAKKDQLTLRGPLYGNNRSHS.

It belongs to the bacterial ribosomal protein bL28 family.

This chain is Large ribosomal subunit protein bL28, found in Mycoplasma genitalium (strain ATCC 33530 / DSM 19775 / NCTC 10195 / G37) (Mycoplasmoides genitalium).